The chain runs to 364 residues: Chorismate synthase (364 aa).

Arg-47 lines the NADP(+) pocket. Residues 125–127, Gly-288, 303–307, and Arg-329 contribute to the FMN site; these read RAS and KPTAT.

It belongs to the chorismate synthase family. In terms of assembly, homotetramer. FMNH2 serves as cofactor.

It carries out the reaction 5-O-(1-carboxyvinyl)-3-phosphoshikimate = chorismate + phosphate. Its pathway is metabolic intermediate biosynthesis; chorismate biosynthesis; chorismate from D-erythrose 4-phosphate and phosphoenolpyruvate: step 7/7. Functionally, catalyzes the anti-1,4-elimination of the C-3 phosphate and the C-6 proR hydrogen from 5-enolpyruvylshikimate-3-phosphate (EPSP) to yield chorismate, which is the branch point compound that serves as the starting substrate for the three terminal pathways of aromatic amino acid biosynthesis. This reaction introduces a second double bond into the aromatic ring system. The chain is Chorismate synthase from Synechococcus sp. (strain CC9605).